The sequence spans 660 residues: Pro-secreted protein ORF2 (660 aa).

The N-terminal stretch at 1 to 23 (MRPRAVLLLLFVLLPMLPAPPAG) is a signal peptide. Disordered stretches follow at residues 19 to 43 (APPAGQPSGRRRGRRSGGAGGGFWG) and 64 to 125 (ADVV…VPDV). The short motif at 28-33 (RRRGRR) is the Nuclear localization signal element. The span at 93-124 (RPSAAPRRRSAPAGAAPLTAVSPAPDTAPVPD) shows a compositional bias: low complexity. Asparagine 137 and asparagine 310 each carry an N-linked (GlcNAc...) asparagine; by host glycan. Positions 368-394 (IALTLFNLADTLLGGLPTELISSAGGQ) are particle formation. Residue asparagine 562 is glycosylated (N-linked (GlcNAc...) asparagine; by host). The interval 585-610 (TTSLGAGPTSISAVGVLAPHSALAVL) is oligomerization.

It belongs to the hepevirus capsid protein family. In terms of assembly, homodimer. As to quaternary structure, self-assembles to form the capsid. The capsid is dominated by dimers that define the 30 morphological units. Interacts with phosphorylated protein ORF3. Interacts with host TMEM134. Interacts with host ASGR1 and ASGR2; these interactions facilitate infection of host hepatocytes. Post-translationally, cleaved by host protease in the N-terminus. In terms of processing, N-glycosylated. Not N-glycosylated. The C-terminus of the capsid protein ORF2 is truncated in non-enveloped virions shedded in feces, probably due to host proteases.

It is found in the secreted. Its subcellular location is the virion. It localises to the host cytoplasm. The protein localises to the host endoplasmic reticulum. The protein resides in the host Golgi apparatus. It is found in the host cell surface. Its subcellular location is the host nucleus. Functionally, plays a role in the inhibition of host antibody-mediated neutralization without blocking viral cell entry. Its function is as follows. Forms an icosahedral capsid with a T=1 symmetry and a 34 nm diameter. The capsid is composed of 60 copies linked to each other. Binds to the 5' end of the genomic RNA to mediate genome encapsidation. Binds to heparin surface proteoglycans (HSPGs) to mediate viral entry. Additionally, the interactions with host ASGR1 and ASGR2 facilitate viral infection of hepatocytes. Inhibits IFN production by blocking host TBK1-induced IRF3 phosphorylation. The nuclear form probably modulates host gene expression. This is Pro-secreted protein ORF2 from Hepatitis E virus genotype 3 (isolate Human/United States/US2) (HEV-3).